Here is a 387-residue protein sequence, read N- to C-terminus: Leucine aminopeptidase 1 (387 aa).

The first 18 residues, 1–18 (MKFTNLSLLALSASLASA), serve as a signal peptide directing secretion. Residues 19–86 (RFVEQHETDQ…LGTLRTSSVK (68 aa)) constitute a propeptide that is removed on maturation. Asn-179 carries N-linked (GlcNAc...) asparagine glycosylation. Residues His-187, Asp-206, Glu-245, and Asp-272 each contribute to the Zn(2+) site. Cys-321 and Cys-325 are joined by a disulfide. Residue His-354 participates in Zn(2+) binding.

This sequence belongs to the peptidase M28 family. M28E subfamily. As to quaternary structure, monomer. The cofactor is Zn(2+).

The protein localises to the secreted. Extracellular aminopeptidase that allows assimilation of proteinaceous substrates. This is Leucine aminopeptidase 1 (lap1) from Sclerotinia sclerotiorum (strain ATCC 18683 / 1980 / Ss-1) (White mold).